A 193-amino-acid chain; its full sequence is Xanthine phosphoribosyltransferase (193 aa).

Residues Leu-20 and Asn-27 each coordinate xanthine. 129–133 (ANGKA) is a binding site for 5-phospho-alpha-D-ribose 1-diphosphate. Lys-157 contributes to the xanthine binding site.

This sequence belongs to the purine/pyrimidine phosphoribosyltransferase family. Xpt subfamily. As to quaternary structure, homodimer.

It is found in the cytoplasm. The catalysed reaction is XMP + diphosphate = xanthine + 5-phospho-alpha-D-ribose 1-diphosphate. Its pathway is purine metabolism; XMP biosynthesis via salvage pathway; XMP from xanthine: step 1/1. Converts the preformed base xanthine, a product of nucleic acid breakdown, to xanthosine 5'-monophosphate (XMP), so it can be reused for RNA or DNA synthesis. This Bifidobacterium longum subsp. infantis (strain ATCC 15697 / DSM 20088 / JCM 1222 / NCTC 11817 / S12) protein is Xanthine phosphoribosyltransferase.